Consider the following 396-residue polypeptide: Elongation factor Tu (396 aa).

In terms of domain architecture, tr-type G spans 10–205 (KPHVNIGTIG…AVDESIPDPV (196 aa)). The G1 stretch occupies residues 19 to 26 (GHVDHGKT). 19–26 (GHVDHGKT) provides a ligand contact to GTP. Thr-26 is a Mg(2+) binding site. The G2 stretch occupies residues 62–66 (GITIN). A G3 region spans residues 83–86 (DAPG). Residues 83–87 (DAPGH) and 138–141 (NKAD) contribute to the GTP site. A G4 region spans residues 138-141 (NKAD). The G5 stretch occupies residues 175-177 (SAL).

Belongs to the TRAFAC class translation factor GTPase superfamily. Classic translation factor GTPase family. EF-Tu/EF-1A subfamily. As to quaternary structure, monomer.

It localises to the cytoplasm. The catalysed reaction is GTP + H2O = GDP + phosphate + H(+). In terms of biological role, GTP hydrolase that promotes the GTP-dependent binding of aminoacyl-tRNA to the A-site of ribosomes during protein biosynthesis. This is Elongation factor Tu from Rhodococcus jostii (strain RHA1).